Here is a 79-residue protein sequence, read N- to C-terminus: MSLEVFEKLEAKVQQAIDTITLLQMEIEELKEKNNSLTQEVQSAQHQREELERENNSLKEQQSGWQERLQALLGRMEEV.

The stretch at 3–79 (LEVFEKLEAK…QALLGRMEEV (77 aa)) forms a coiled coil. Residues 36–45 (SLTQEVQSAQ) are compositionally biased toward polar residues. A disordered region spans residues 36-63 (SLTQEVQSAQHQREELERENNSLKEQQS). The span at 46-57 (HQREELERENNS) shows a compositional bias: basic and acidic residues.

This sequence belongs to the ZapB family. In terms of assembly, homodimer. The ends of the coiled-coil dimer bind to each other, forming polymers. Interacts with FtsZ.

Its subcellular location is the cytoplasm. Its function is as follows. Non-essential, abundant cell division factor that is required for proper Z-ring formation. It is recruited early to the divisome by direct interaction with FtsZ, stimulating Z-ring assembly and thereby promoting cell division earlier in the cell cycle. Its recruitment to the Z-ring requires functional FtsA or ZipA. The chain is Cell division protein ZapB from Salmonella agona (strain SL483).